A 171-amino-acid polypeptide reads, in one-letter code: uncharacterized protein (171 aa).

The 134-residue stretch at A33 to D166 folds into the HTH marR-type domain. Positions T80–K103 form a DNA-binding region, H-T-H motif.

This is an uncharacterized protein from Bacillus subtilis (strain 168).